The chain runs to 291 residues: Bis(5'-nucleosyl)-tetraphosphatase, symmetrical (291 aa).

Belongs to the Ap4A hydrolase family.

It catalyses the reaction P(1),P(4)-bis(5'-adenosyl) tetraphosphate + H2O = 2 ADP + 2 H(+). In terms of biological role, hydrolyzes diadenosine 5',5'''-P1,P4-tetraphosphate to yield ADP. The polypeptide is Bis(5'-nucleosyl)-tetraphosphatase, symmetrical (Coxiella burnetii (strain CbuG_Q212) (Coxiella burnetii (strain Q212))).